The sequence spans 704 residues: Elongation factor G (704 aa).

In terms of domain architecture, tr-type G spans 8 to 291; it reads ANVRNIGIMA…AVIEYLPSPV (284 aa). Residues 17–24, 90–94, and 144–147 each bind GTP; these read AHIDAGKT, DTPGH, and NKMD.

This sequence belongs to the TRAFAC class translation factor GTPase superfamily. Classic translation factor GTPase family. EF-G/EF-2 subfamily.

It is found in the cytoplasm. Functionally, catalyzes the GTP-dependent ribosomal translocation step during translation elongation. During this step, the ribosome changes from the pre-translocational (PRE) to the post-translocational (POST) state as the newly formed A-site-bound peptidyl-tRNA and P-site-bound deacylated tRNA move to the P and E sites, respectively. Catalyzes the coordinated movement of the two tRNA molecules, the mRNA and conformational changes in the ribosome. The sequence is that of Elongation factor G from Chlorobium phaeobacteroides (strain BS1).